Reading from the N-terminus, the 443-residue chain is Thymidine phosphorylase (443 aa).

Belongs to the thymidine/pyrimidine-nucleoside phosphorylase family. As to quaternary structure, homodimer.

It carries out the reaction thymidine + phosphate = 2-deoxy-alpha-D-ribose 1-phosphate + thymine. It participates in pyrimidine metabolism; dTMP biosynthesis via salvage pathway; dTMP from thymine: step 1/2. Functionally, the enzymes which catalyze the reversible phosphorolysis of pyrimidine nucleosides are involved in the degradation of these compounds and in their utilization as carbon and energy sources, or in the rescue of pyrimidine bases for nucleotide synthesis. The chain is Thymidine phosphorylase from Shewanella sp. (strain MR-4).